Consider the following 275-residue polypeptide: 2-C-methyl-D-erythritol 4-phosphate cytidylyltransferase (275 aa).

Belongs to the IspD/TarI cytidylyltransferase family. IspD subfamily.

The catalysed reaction is 2-C-methyl-D-erythritol 4-phosphate + CTP + H(+) = 4-CDP-2-C-methyl-D-erythritol + diphosphate. Its pathway is isoprenoid biosynthesis; isopentenyl diphosphate biosynthesis via DXP pathway; isopentenyl diphosphate from 1-deoxy-D-xylulose 5-phosphate: step 2/6. In terms of biological role, catalyzes the formation of 4-diphosphocytidyl-2-C-methyl-D-erythritol from CTP and 2-C-methyl-D-erythritol 4-phosphate (MEP). The chain is 2-C-methyl-D-erythritol 4-phosphate cytidylyltransferase from Corynebacterium jeikeium (strain K411).